The sequence spans 613 residues: Serine/threonine-protein kinase pkpA (613 aa).

Residues 17–269 (SKLNTVLGKG…AQEILEHRFL (253 aa)) enclose the Protein kinase domain. Residues 23–31 (LGKGAYKVV) and lysine 50 each bind ATP. Aspartate 140 serves as the catalytic Proton acceptor. Disordered regions lie at residues 424–475 (LQPQ…STML) and 589–613 (VTQR…QELM). Pro residues predominate over residues 427–441 (QPQPQPQPQPQPQPQ). The segment covering 442 to 475 (PQFQLQPQLQYLSPQSTTSPGPTSDDNSTNSTML) has biased composition (low complexity). The span at 592 to 602 (RGLQGTRSGAS) shows a compositional bias: polar residues.

It belongs to the protein kinase superfamily. Ser/Thr protein kinase family.

The enzyme catalyses L-seryl-[protein] + ATP = O-phospho-L-seryl-[protein] + ADP + H(+). It catalyses the reaction L-threonyl-[protein] + ATP = O-phospho-L-threonyl-[protein] + ADP + H(+). Its function is as follows. Serine/threonine protein kinase that probably participates as an intermediate in an intracellular system controlling nuclear proliferation. This Phycomyces blakesleeanus (strain ATCC 8743b / DSM 1359 / FGSC 10004 / NBRC 33097 / NRRL 1555) protein is Serine/threonine-protein kinase pkpA (pkpA).